A 451-amino-acid polypeptide reads, in one-letter code: Tubulin gamma-1 chain (451 aa).

Ala142–Gly148 contributes to the GTP binding site.

This sequence belongs to the tubulin family.

Its subcellular location is the cytoplasm. The protein localises to the cytoskeleton. It is found in the microtubule organizing center. It localises to the centrosome. The protein resides in the spindle. Functionally, tubulin is the major constituent of microtubules. The gamma chain is found at microtubule organizing centers (MTOC) such as the spindle poles or the centrosome, suggesting that it is involved in the minus-end nucleation of microtubule assembly. This chain is Tubulin gamma-1 chain (tubg1), found in Xenopus laevis (African clawed frog).